The primary structure comprises 638 residues: LIM domain kinase 2 (638 aa).

LIM zinc-binding domains lie at 12–63 (CQGC…CHKD) and 72–124 (CHGC…CGKC). The PDZ domain maps to 152–239 (HISMPATTEG…TLQLLIEHDP (88 aa)). Residues 280 to 304 (RRRSLRRSNSISKSPGPSSPKEPLL) form a disordered region. Residues 286-304 (RSNSISKSPGPSSPKEPLL) show a composition bias toward low complexity. Phosphoserine occurs at positions 293 and 298. The Protein kinase domain occupies 331-608 (LIHGEVLGKG…DFFEALSLYL (278 aa)). ATP contacts are provided by residues 337-345 (LGKGFFGQA) and asparagine 360. Residue aspartate 451 is part of the active site. A Phosphothreonine; by ROCK1 and CDC42BP modification is found at threonine 505.

The protein belongs to the protein kinase superfamily. TKL Ser/Thr protein kinase family. Binds ROCK1 and MARF1. Interacts with NISCH. In terms of processing, phosphorylated on serine and/or threonine residues by ROCK1.

Its subcellular location is the cytoplasm. The protein localises to the cytoskeleton. The protein resides in the spindle. It is found in the microtubule organizing center. It localises to the centrosome. The catalysed reaction is L-seryl-[protein] + ATP = O-phospho-L-seryl-[protein] + ADP + H(+). It carries out the reaction L-threonyl-[protein] + ATP = O-phospho-L-threonyl-[protein] + ADP + H(+). Serine/threonine-protein kinase that plays an essential role in the regulation of actin filament dynamics. Acts downstream of several Rho family GTPase signal transduction pathways. Involved in astral microtubule organization and mitotic spindle orientation during early stages of mitosis by mediating phosphorylation of TPPP. Displays serine/threonine-specific phosphorylation of myelin basic protein and histone (MBP) in vitro. Suppresses ciliogenesis via multiple pathways; phosphorylation of CFL1, suppression of directional trafficking of ciliary vesicles to the ciliary base, and by facilitating YAP1 nuclear localization where it acts as a transcriptional corepressor of the TEAD4 target genes AURKA and PLK1. This is LIM domain kinase 2 (LIMK2) from Bos taurus (Bovine).